Reading from the N-terminus, the 212-residue chain is F-box protein GID2 (212 aa).

Positions Met-1–Pro-74 are disordered. Residues Asp-35–Glu-59 show a composition bias toward low complexity. The 47-residue stretch at Gln-70 to Ala-116 folds into the F-box domain.

Part of some SCF(GID2) complex, which consist of a SKP1 protein, CUL1, GID2 and some RING box protein. Interacts directly with SKP2 and SKP15. Interacts directly with DELLA protein SLR1. May have a higher affinity for phosphorylated SLR1 proteins. As to expression, widely expressed. Preferentially expressed in unopened flowers, shoot apices and elongation stem. Expressed at lower level in the leaf blades, leaf sheaths, roots and rachis.

The protein localises to the nucleus. Its pathway is protein modification; protein ubiquitination. Essential component of some SCF-type E3 ligase complex that positively regulates the gibberellin signaling pathway. Upon gibberellin treatment, the complex mediates the ubiquitination and subsequent degradation of DELLA protein SLR1, a repressor of the gibberellin pathway, leading to activate the pathway. The sequence is that of F-box protein GID2 (GID2) from Oryza sativa subsp. japonica (Rice).